We begin with the raw amino-acid sequence, 328 residues long: Probable transcription factor At4g00610 (328 aa).

Residues 31–143 are disordered; it reads AKNKTLVTPS…ERAKTETETG (113 aa). Residues 35-54 are compositionally biased toward polar residues; that stretch reads TLVTPSTVKKSSDVASTSKK. Positions 84 to 108 are enriched in acidic residues; sequence SEEEEEDEPSSDSESGSESESDTEA. Residues 122-143 are compositionally biased toward basic and acidic residues; sequence NEKRQSEGKPEEERAKTETETG.

This sequence belongs to the GeBP family.

The sequence is that of Probable transcription factor At4g00610 from Arabidopsis thaliana (Mouse-ear cress).